Here is an 877-residue protein sequence, read N- to C-terminus: Leucine--tRNA ligase (877 aa).

The short motif at 43–53 is the 'HIGH' region element; sequence PYPSGRIHMGH. Residues 628 to 632 carry the 'KMSKS' region motif; that stretch reads KMSKS. Residue K631 coordinates ATP.

Belongs to the class-I aminoacyl-tRNA synthetase family.

The protein resides in the cytoplasm. It catalyses the reaction tRNA(Leu) + L-leucine + ATP = L-leucyl-tRNA(Leu) + AMP + diphosphate. In Brucella canis (strain ATCC 23365 / NCTC 10854 / RM-666), this protein is Leucine--tRNA ligase.